A 285-amino-acid chain; its full sequence is Homeobox protein vex1 (285 aa).

2 disordered regions span residues 30–54 (KSGN…LPSV) and 69–88 (NEER…APQE). The segment covering 69 to 80 (NEERSPPVKDQL) has biased composition (basic and acidic residues). Positions 131–190 (AARARTKFSPEQLEELERSFKENRYIGSSEKRRLSKVLKLSETQIKTWFQNRRMKFKRQT) form a DNA-binding region, homeobox.

As to expression, widely expressed in the embryo prior to gastrulation. Becomes restricted to the ventral marginal zone by mid/late gastrulation. Ventral localization persists during gastrulation and neurulation in the ventral region of the closed blastopore and in the proctodeum during tail bud stages.

It is found in the nucleus. Functionally, transcriptional repressor. Acts in a ventral signaling pathway downstream of bmp4 to antagonize the Spemann organizer and ventrally pattern the embryonic mesoderm. Represses transcription of the dorsal genes gsc and otx2. In Xenopus laevis (African clawed frog), this protein is Homeobox protein vex1.